Reading from the N-terminus, the 352-residue chain is Ion-translocating oxidoreductase complex subunit D (352 aa).

4 helical membrane-spanning segments follow: residues Ile20–Gly40, Gly42–Leu62, Val69–Pro91, and Pro123–Leu143. Position 187 is an FMN phosphoryl threonine (Thr187). A run of 5 helical transmembrane segments spans residues Leu215–Leu235, Trp242–Phe262, Leu267–Leu287, Leu301–Pro321, and Asp322–Thr342.

It belongs to the NqrB/RnfD family. In terms of assembly, the complex is composed of six subunits: RsxA, RsxB, RsxC, RsxD, RsxE and RsxG. FMN serves as cofactor.

It localises to the cell inner membrane. In terms of biological role, part of a membrane-bound complex that couples electron transfer with translocation of ions across the membrane. Required to maintain the reduced state of SoxR. The polypeptide is Ion-translocating oxidoreductase complex subunit D (Salmonella typhi).